A 520-amino-acid chain; its full sequence is Keratin, type II cytoskeletal 72 (520 aa).

The tract at residues 1–133 (MSRQLTLYPG…DPEIQKVRAQ (133 aa)) is head. The segment at 134–169 (EREQIKALNNKFASFIDKVRFLEQQNQVLETKWELL) is coil 1A. An IF rod domain is found at 134 to 447 (EREQIKALNN…KLLESEESRM (314 aa)). The segment at 170-188 (QQLDQNNSRRSLEPVHESY) is linker 1. Residues 189–280 (ISNLQKQLEI…VLFEGEIAQM (92 aa)) are coil 1B. The linker 12 stretch occupies residues 281–304 (QSHISDTSVILSMDNNRQLDLDSI). A coil 2 region spans residues 305–443 (LAEVRAQYEE…ATYRKLLESE (139 aa)). Residues 444–520 (ESRMAGEYPS…SSCVSKKASR (77 aa)) are tail. The segment at 495–520 (GSCGSELKDPPAKTSASSCVSKKASR) is disordered.

This sequence belongs to the intermediate filament family. As to quaternary structure, heterotetramer of two type I and two type II keratins.

Functionally, has a role in hair formation. Specific component of keratin intermediate filaments in the inner root sheath (IRS) of the hair follicle. The sequence is that of Keratin, type II cytoskeletal 72 (Krt72) from Rattus norvegicus (Rat).